Consider the following 103-residue polypeptide: Protamine-3 (103 aa).

Positions 1-103 (MGSRCAKLNT…QSPEPKRTPS (103 aa)) are disordered. The span at 10-21 (TGQSPGHSPGHS) shows a compositional bias: low complexity. Positions 50–66 (GEEEEEEEEEGEEEEKE) are enriched in acidic residues. The span at 78 to 90 (EPERQEEGHKDNA) shows a compositional bias: basic and acidic residues. Ser-95 is modified (phosphoserine).

The protein belongs to the protamine P3 family.

It localises to the nucleus. Its subcellular location is the chromosome. Protamines substitute for histones in the chromatin of sperm during the haploid phase of spermatogenesis. They compact sperm DNA into a highly condensed, stable and inactive complex. This chain is Protamine-3 (PRM3), found in Homo sapiens (Human).